Consider the following 494-residue polypeptide: ATP synthase subunit beta, plastid (494 aa).

169-176 (GGAGVGKT) lines the ATP pocket.

The protein belongs to the ATPase alpha/beta chains family. F-type ATPases have 2 components, CF(1) - the catalytic core - and CF(0) - the membrane proton channel. CF(1) has five subunits: alpha(3), beta(3), gamma(1), delta(1), epsilon(1). CF(0) has four main subunits: a(1), b(1), b'(1) and c(9-12).

It is found in the plastid membrane. It catalyses the reaction ATP + H2O + 4 H(+)(in) = ADP + phosphate + 5 H(+)(out). Produces ATP from ADP in the presence of a proton gradient across the membrane. The catalytic sites are hosted primarily by the beta subunits. This is ATP synthase subunit beta, plastid (atpB) from Cuscuta sandwichiana (Kauna'oa).